The following is a 292-amino-acid chain: F-box/LRR-repeat protein 15 (292 aa).

An F-box domain is found at 12–59; the sequence is LLDLPWEDVLVPHILSYLPLRHILSLQRVSKPFHSLVHIYLCNCRHFD. LRR repeat units follow at residues 134–155, 160–181, 186–207, 212–233, and 238–259; these read HLQN…RSLA, CLEA…SYLV, RLKS…EETA, DLEH…RTLA, and NLKS…GNLR.

The protein belongs to the FBXL15 family. In terms of assembly, part of the SCF (SKP1-CUL1-F-box) E3 ubiquitin-protein ligase complex SCF(FBXL15).

Its subcellular location is the cytoplasm. It participates in protein modification; protein ubiquitination. Substrate recognition component of a SCF (SKP1-CUL1-F-box protein) E3 ubiquitin-protein ligase complex which mediates the ubiquitination and subsequent proteasomal degradation of target proteins. Acts as a positive regulator of the BMP signaling pathway. Required for dorsal/ventral pattern formation. In Xenopus laevis (African clawed frog), this protein is F-box/LRR-repeat protein 15 (fbxl15).